The chain runs to 274 residues: Large ribosomal subunit protein uL2cz/uL2cy (274 aa).

2 disordered regions span residues 1–20 (MAIH…AVDS) and 223–274 (MNPV…RRSK).

The protein belongs to the universal ribosomal protein uL2 family. Part of the 50S ribosomal subunit.

It localises to the plastid. It is found in the chloroplast. The chain is Large ribosomal subunit protein uL2cz/uL2cy (rpl2-A) from Eucalyptus globulus subsp. globulus (Tasmanian blue gum).